The following is a 321-amino-acid chain: Lambda-crystallin homolog (321 aa).

Phosphoserine is present on Ser6. NAD(+) contacts are provided by residues 19-20 (LI), Asp39, Glu100, and Lys105.

Belongs to the 3-hydroxyacyl-CoA dehydrogenase family. As to quaternary structure, homodimer.

The protein resides in the cytoplasm. It carries out the reaction L-gulonate + NAD(+) = 3-dehydro-L-gulonate + NADH + H(+). With respect to regulation, inhibited by malonate. In terms of biological role, has high L-gulonate 3-dehydrogenase activity. It also exhibits low dehydrogenase activity toward L-3-hydroxybutyrate (HBA) and L-threonate. This chain is Lambda-crystallin homolog (CRYL1), found in Bos taurus (Bovine).